Here is a 974-residue protein sequence, read N- to C-terminus: Toxin subunit YenC1 (974 aa).

9 RHS repeats span residues 165 to 179, 290 to 304, 322 to 336, 354 to 368, 398 to 412, 490 to 504, 570 to 584, 596 to 610, and 630 to 644; these read AGQC…GLNQ, GVLT…TQRL, FQDL…GNVL, VPEN…YQLV, NYIR…GNLM, SDSE…SQRV, NDEL…IGSS, SQEE…AVWM, and DATG…YYQP. The interval 600–680 is RHS-repeat associated core domain; it reads YYPYGGTAVW…PIVLHDPDGL (81 aa). The interval 699–940 is cytotoxic necrotising factor domain; it reads ISSLKGTGPF…GEVSASTLLE (242 aa).

This sequence belongs to the RHS family. In terms of assembly, semipurified toxin complex consists of at least YenA1-YenA2-YenB-YenC1-YenC2-Chi1-Chi2. The Yen-TC:K9 subcomplex is about 26 nm tall and 22 nm in diameter with 5-fold symmetry and 5 copies of YenA1, YenA2, Chi1 and Chi2; the chitinase subunits may be solvent accessible on the exterior the complex. The Yen-TC:K9 subcomplex has no insecticidal activity. The native complex with additional YenB, YenC1 and YenC2 subunits is 16 nm taller and is insecticidal; the toxicity-conferring subunits are present at about 1 copy each.

It localises to the secreted. Its activity is regulated as follows. Toxin complex is secreted when grown at 25 degrees Celsius or less; at higher temperatures the proteins are present intracellularly but not secreted. In terms of biological role, part of an orally active toxin complex (TC) with strong insecticidal effects on larvae of the Coleoptera Costelytra zealandica, Acrossidius tasmania and Adoryphorus couloni and some Lepidoptera larvae. The TC has an endochitinase activity. In Yersinia entomophaga, this protein is Toxin subunit YenC1.